The primary structure comprises 415 residues: Serine hydroxymethyltransferase (415 aa).

Residues Leu-117 and 121 to 123 (GHL) contribute to the (6S)-5,6,7,8-tetrahydrofolate site. Lys-225 carries the N6-(pyridoxal phosphate)lysine modification. 349–351 (SPF) is a binding site for (6S)-5,6,7,8-tetrahydrofolate.

Belongs to the SHMT family. In terms of assembly, homodimer. Requires pyridoxal 5'-phosphate as cofactor.

The protein localises to the cytoplasm. It carries out the reaction (6R)-5,10-methylene-5,6,7,8-tetrahydrofolate + glycine + H2O = (6S)-5,6,7,8-tetrahydrofolate + L-serine. It functions in the pathway one-carbon metabolism; tetrahydrofolate interconversion. The protein operates within amino-acid biosynthesis; glycine biosynthesis; glycine from L-serine: step 1/1. Its function is as follows. Catalyzes the reversible interconversion of serine and glycine with tetrahydrofolate (THF) serving as the one-carbon carrier. This reaction serves as the major source of one-carbon groups required for the biosynthesis of purines, thymidylate, methionine, and other important biomolecules. Also exhibits THF-independent aldolase activity toward beta-hydroxyamino acids, producing glycine and aldehydes, via a retro-aldol mechanism. The chain is Serine hydroxymethyltransferase from Nitratiruptor sp. (strain SB155-2).